A 48-amino-acid polypeptide reads, in one-letter code: Large ribosomal subunit protein bL36c (48 aa).

The protein belongs to the bacterial ribosomal protein bL36 family.

It localises to the plastid. The protein localises to the chloroplast. This Rhodomonas salina (Cryptomonas salina) protein is Large ribosomal subunit protein bL36c.